Consider the following 284-residue polypeptide: MREITPRKIIEMKGKEKIAMVTAYDYPSALLADKAGMDIVFVGDSLGMVVYGEPNTLNVSMEQMVFHTRAVAKAVKRALVLADMPFGSYEVSVEEGVKNAMRLIRAGADAVKIEGGYDHKKLVKKLVRMGIPVMGHTGLTPQRYLRLGGYRLMGETEEEIEEILRDAKALEKAGAFAVVLEFVLADVAKLVTEEVSIPTIGIGAGPHVDGQVLVWHDLLGIYENVPPFVKKYADLASIIQLALENYRGEVKEGRFPAKEHYWEFLDKDDFERKKMKALERLEDE.

Asp44 and Asp83 together coordinate Mg(2+). 3-methyl-2-oxobutanoate-binding positions include 44-45 (DS), Asp83, and Lys112. Glu114 provides a ligand contact to Mg(2+). The active-site Proton acceptor is Glu181.

The protein belongs to the PanB family. In terms of assembly, homodecamer; pentamer of dimers. Requires Mg(2+) as cofactor.

The protein resides in the cytoplasm. It catalyses the reaction 3-methyl-2-oxobutanoate + (6R)-5,10-methylene-5,6,7,8-tetrahydrofolate + H2O = 2-dehydropantoate + (6S)-5,6,7,8-tetrahydrofolate. It participates in cofactor biosynthesis; coenzyme A biosynthesis. Its activity is regulated as follows. Neither activated nor inhibited by coenzyme A. Functionally, catalyzes the reversible reaction in which hydroxymethyl group from 5,10-methylenetetrahydrofolate is transferred onto alpha-ketoisovalerate to form ketopantoate. The polypeptide is 3-methyl-2-oxobutanoate hydroxymethyltransferase (Thermococcus kodakarensis (strain ATCC BAA-918 / JCM 12380 / KOD1) (Pyrococcus kodakaraensis (strain KOD1))).